The following is a 403-amino-acid chain: Creatinase (403 aa).

His-232 is a catalytic residue.

Belongs to the peptidase M24 family. Creatinase subfamily. As to quaternary structure, homodimer.

The catalysed reaction is creatine + H2O = sarcosine + urea. This chain is Creatinase, found in Pseudomonas putida (Arthrobacter siderocapsulatus).